The sequence spans 35 residues: Mu-theraphotoxin-Ca2a (35 aa).

3 cysteine pairs are disulfide-bonded: Cys2–Cys17, Cys9–Cys24, and Cys16–Cys31.

The protein belongs to the neurotoxin 10 (Hwtx-1) family. 10 (haplotoxin-1) subfamily. Expressed by the venom gland.

Its subcellular location is the secreted. Its function is as follows. Potently inhibits Nav1.7/SCN9A (IC(50)=98.1 nM), and moderately inhibits Nav1.2/SCN2A (IC(50)=216.3 nM), Nav1.6/SCN8A (IC(50)=313.6 nM), and Nav1.3/SCN3A (IC(50)=491.3 nM). Hyperpolarizes the slow inactivation, but does not alter the voltage-dependent activation or fast inactivation of Nav1.7/SCN9A. Binds with Nav1.7/SCN9A at the extracellular S3-S4 linker of domain II (site 4). In vivo, exhibits dose-dependent analgesic efficacy by reducing pain responses in rodent models of formalin-induced paw licking, hot plate test, and acetic acid-induced writhing. The polypeptide is Mu-theraphotoxin-Ca2a (Cyriopagopus albostriatus (Cambodian tiger tarantula)).